Consider the following 239-residue polypeptide: Purine nucleoside phosphorylase DeoD-type (239 aa).

H5 serves as a coordination point for a purine D-ribonucleoside. Residues G21, R25, R44, and 88–91 contribute to the phosphate site; that span reads RVGS. Residues 180 to 182 and 204 to 205 contribute to the a purine D-ribonucleoside site; these read EME and SD. Catalysis depends on D205, which acts as the Proton donor.

This sequence belongs to the PNP/UDP phosphorylase family. In terms of assembly, homohexamer; trimer of homodimers.

The catalysed reaction is a purine D-ribonucleoside + phosphate = a purine nucleobase + alpha-D-ribose 1-phosphate. It carries out the reaction a purine 2'-deoxy-D-ribonucleoside + phosphate = a purine nucleobase + 2-deoxy-alpha-D-ribose 1-phosphate. Its function is as follows. Catalyzes the reversible phosphorolytic breakdown of the N-glycosidic bond in the beta-(deoxy)ribonucleoside molecules, with the formation of the corresponding free purine bases and pentose-1-phosphate. The protein is Purine nucleoside phosphorylase DeoD-type of Salmonella choleraesuis (strain SC-B67).